We begin with the raw amino-acid sequence, 224 residues long: Thiamine-triphosphatase (224 aa).

Residue alanine 2 is modified to N-acetylalanine. In terms of domain architecture, CYTH spans 5–201 (LIEVERKFAP…AKLMVYLQRF (197 aa)). Positions 7 and 9 each coordinate Mg(2+). The substrate site is built by lysine 11, arginine 55, arginine 57, lysine 65, and arginine 125. Residues aspartate 145, glutamate 157, and glutamate 159 each contribute to the Mg(2+) site. Glutamate 157 provides a ligand contact to substrate. Lysine 193 contacts substrate.

This sequence belongs to the ThTPase family. As to quaternary structure, monomer. Mg(2+) serves as cofactor.

The protein localises to the cytoplasm. It carries out the reaction thiamine triphosphate + H2O = thiamine diphosphate + phosphate + H(+). Functionally, hydrolase highly specific for thiamine triphosphate (ThTP). This chain is Thiamine-triphosphatase (Thtpa), found in Mus musculus (Mouse).